The following is a 138-amino-acid chain: Large-conductance mechanosensitive channel (138 aa).

Transmembrane regions (helical) follow at residues 15-35, 38-58, and 80-100; these read VDLA…NSVV, IFMP…MFIQ, and GNFI…FFLV.

It belongs to the MscL family. Homopentamer.

Its subcellular location is the cell inner membrane. Its function is as follows. Channel that opens in response to stretch forces in the membrane lipid bilayer. May participate in the regulation of osmotic pressure changes within the cell. This chain is Large-conductance mechanosensitive channel, found in Bartonella bacilliformis (strain ATCC 35685 / KC583 / Herrer 020/F12,63).